We begin with the raw amino-acid sequence, 174 residues long: Large ribosomal subunit protein uL10 (174 aa).

This sequence belongs to the universal ribosomal protein uL10 family. In terms of assembly, part of the ribosomal stalk of the 50S ribosomal subunit. The N-terminus interacts with L11 and the large rRNA to form the base of the stalk. The C-terminus forms an elongated spine to which L12 dimers bind in a sequential fashion forming a multimeric L10(L12)X complex.

Its function is as follows. Forms part of the ribosomal stalk, playing a central role in the interaction of the ribosome with GTP-bound translation factors. The polypeptide is Large ribosomal subunit protein uL10 (Vesicomyosocius okutanii subsp. Calyptogena okutanii (strain HA)).